Here is a 223-residue protein sequence, read N- to C-terminus: Phosphoribosylformylglycinamidine synthase subunit PurQ (223 aa).

The 221-residue stretch at 3–223 folds into the Glutamine amidotransferase type-1 domain; sequence FAVLVFPGSN…MVKSWREQHV (221 aa). Catalysis depends on cysteine 85, which acts as the Nucleophile. Residues histidine 193 and glutamate 195 contribute to the active site.

As to quaternary structure, part of the FGAM synthase complex composed of 1 PurL, 1 PurQ and 2 PurS subunits.

The protein localises to the cytoplasm. It carries out the reaction N(2)-formyl-N(1)-(5-phospho-beta-D-ribosyl)glycinamide + L-glutamine + ATP + H2O = 2-formamido-N(1)-(5-O-phospho-beta-D-ribosyl)acetamidine + L-glutamate + ADP + phosphate + H(+). The enzyme catalyses L-glutamine + H2O = L-glutamate + NH4(+). Its pathway is purine metabolism; IMP biosynthesis via de novo pathway; 5-amino-1-(5-phospho-D-ribosyl)imidazole from N(2)-formyl-N(1)-(5-phospho-D-ribosyl)glycinamide: step 1/2. In terms of biological role, part of the phosphoribosylformylglycinamidine synthase complex involved in the purines biosynthetic pathway. Catalyzes the ATP-dependent conversion of formylglycinamide ribonucleotide (FGAR) and glutamine to yield formylglycinamidine ribonucleotide (FGAM) and glutamate. The FGAM synthase complex is composed of three subunits. PurQ produces an ammonia molecule by converting glutamine to glutamate. PurL transfers the ammonia molecule to FGAR to form FGAM in an ATP-dependent manner. PurS interacts with PurQ and PurL and is thought to assist in the transfer of the ammonia molecule from PurQ to PurL. The protein is Phosphoribosylformylglycinamidine synthase subunit PurQ of Staphylococcus aureus (strain Mu50 / ATCC 700699).